The sequence spans 481 residues: 4-O-methyl-glucuronoyl methylesterase (481 aa).

Positions 1 to 21 are cleaved as a signal peptide; sequence MVSQTVVSSLLVVLGAAGVRA. The CBM1 domain occupies 23-59; the sequence is QRQSLWGQCGGSGWSGPTLCVDGAWCNPQNQWYHQCI. Intrachain disulfides connect cysteine 108/cysteine 143, cysteine 292/cysteine 428, and cysteine 324/cysteine 400. The GXSYXG catalytic site motif motif lies at 291–296; sequence GCSRNG. Serine 293 serves as the catalytic Nucleophile. Residues lysine 297, glutamine 339, glutamate 347, and tryptophan 391 each contribute to the substrate site. Histidine 427 functions as the Proton donor/acceptor in the catalytic mechanism.

Belongs to the carbohydrate esterase 15 (CE15) family.

Its subcellular location is the secreted. The catalysed reaction is a 4-O-methyl-alpha-D-glucuronosyl ester derivative + H2O = 4-O-methyl-alpha-D-glucuronate derivative + an alcohol + H(+). Glucuronoyl esterase which may play a significant role in biomass degradation, as it is considered to disconnect hemicellulose from lignin through the hydrolysis of the ester bond between 4-O-methyl-D-glucuronic acid residues of glucuronoxylans and aromatic alcohols of lignin. This is 4-O-methyl-glucuronoyl methylesterase from Podospora anserina (strain S / ATCC MYA-4624 / DSM 980 / FGSC 10383) (Pleurage anserina).